Consider the following 511-residue polypeptide: Maturase K (511 aa).

It belongs to the intron maturase 2 family. MatK subfamily.

The protein resides in the plastid. The protein localises to the chloroplast. In terms of biological role, usually encoded in the trnK tRNA gene intron. Probably assists in splicing its own and other chloroplast group II introns. The sequence is that of Maturase K from Phleum pratense (Common timothy).